The following is a 156-amino-acid chain: Ribosomal RNA large subunit methyltransferase H (156 aa).

S-adenosyl-L-methionine contacts are provided by residues leucine 73, glycine 104, and 123–128 (VSSLTL).

The protein belongs to the RNA methyltransferase RlmH family. Homodimer.

It is found in the cytoplasm. The catalysed reaction is pseudouridine(1915) in 23S rRNA + S-adenosyl-L-methionine = N(3)-methylpseudouridine(1915) in 23S rRNA + S-adenosyl-L-homocysteine + H(+). In terms of biological role, specifically methylates the pseudouridine at position 1915 (m3Psi1915) in 23S rRNA. The chain is Ribosomal RNA large subunit methyltransferase H from Paraburkholderia phytofirmans (strain DSM 17436 / LMG 22146 / PsJN) (Burkholderia phytofirmans).